A 348-amino-acid chain; its full sequence is Ion-translocating oxidoreductase complex subunit D (348 aa).

Helical transmembrane passes span valine 20–phenylalanine 39, tyrosine 67–valine 87, and alanine 124–alanine 144. FMN phosphoryl threonine is present on threonine 187. Helical transmembrane passes span tryptophan 221–tryptophan 241, proline 244–alanine 264, phenylalanine 266–isoleucine 286, and leucine 300–proline 320.

It belongs to the NqrB/RnfD family. As to quaternary structure, the complex is composed of six subunits: RnfA, RnfB, RnfC, RnfD, RnfE and RnfG. FMN serves as cofactor.

The protein localises to the cell inner membrane. Part of a membrane-bound complex that couples electron transfer with translocation of ions across the membrane. This Tolumonas auensis (strain DSM 9187 / NBRC 110442 / TA 4) protein is Ion-translocating oxidoreductase complex subunit D.